The sequence spans 249 residues: Probable transcriptional regulatory protein DICTH_1505 (249 aa).

Belongs to the TACO1 family.

It is found in the cytoplasm. This Dictyoglomus thermophilum (strain ATCC 35947 / DSM 3960 / H-6-12) protein is Probable transcriptional regulatory protein DICTH_1505.